The sequence spans 314 residues: Methenyltetrahydromethanopterin cyclohydrolase (314 aa).

Belongs to the MCH family.

Its subcellular location is the cytoplasm. It catalyses the reaction 5,10-methenyl-5,6,7,8-tetrahydromethanopterin + H2O = N(5)-formyl-5,6,7,8-tetrahydromethanopterin + H(+). It functions in the pathway one-carbon metabolism; methanogenesis from CO(2); 5,10-methenyl-5,6,7,8-tetrahydromethanopterin from CO(2): step 3/3. In terms of biological role, catalyzes the reversible interconversion of 5-formyl-H(4)MPT to methenyl-H(4)MPT(+). This chain is Methenyltetrahydromethanopterin cyclohydrolase, found in Methanocorpusculum labreanum (strain ATCC 43576 / DSM 4855 / Z).